The following is a 171-amino-acid chain: Zinc finger A20 and AN1 domain-containing stress-associated protein 8 (171 aa).

The A20-type zinc-finger motif lies at 11–45; sequence PEGPILCINNCGFFGSAATMNMCSKCHKEMIMKQE. Zn(2+) is bound by residues cysteine 17, cysteine 21, cysteine 33, cysteine 36, cysteine 112, cysteine 115, cysteine 126, cysteine 128, cysteine 133, histidine 136, histidine 142, and cysteine 144. The AN1-type zinc-finger motif lies at 106–152; it reads REGPNRCSTCRKRVGLTGFNCRCGNLYCAMHRYSDKHDCQFDYRTAA.

Functionally, may be involved in environmental stress response. The polypeptide is Zinc finger A20 and AN1 domain-containing stress-associated protein 8 (SAP8) (Oryza sativa subsp. indica (Rice)).